The following is a 269-amino-acid chain: Phosphate import ATP-binding protein PstB (269 aa).

The 244-residue stretch at 21–264 (IEIKDFNFFY…PKDRRTENYI (244 aa)) folds into the ABC transporter domain. Residue 55-62 (GPSGCGKT) coordinates ATP.

The protein belongs to the ABC transporter superfamily. Phosphate importer (TC 3.A.1.7) family. In terms of assembly, the complex is composed of two ATP-binding proteins (PstB), two transmembrane proteins (PstC and PstA) and a solute-binding protein (PstS).

The protein resides in the cell membrane. The enzyme catalyses phosphate(out) + ATP + H2O = ADP + 2 phosphate(in) + H(+). In terms of biological role, part of the ABC transporter complex PstSACB involved in phosphate import. Responsible for energy coupling to the transport system. The chain is Phosphate import ATP-binding protein PstB from Mycoplasma capricolum subsp. capricolum (strain California kid / ATCC 27343 / NCTC 10154).